The chain runs to 517 residues: V-type proton ATPase subunit B (517 aa).

Ser4 carries the phosphoserine modification. Residue Lys14 forms a Glycyl lysine isopeptide (Lys-Gly) (interchain with G-Cter in ubiquitin) linkage. At Ser137 the chain carries Phosphoserine. ATP is bound at residue Arg381. The tract at residues Arg487 to Ile517 is disordered. Over residues Asp500–Ser511 the composition is skewed to basic and acidic residues. Ser503 and Ser504 each carry phosphoserine. Lys508 participates in a covalent cross-link: Glycyl lysine isopeptide (Lys-Gly) (interchain with G-Cter in ubiquitin). At Ser511 the chain carries Phosphoserine; by ATM or ATR. Position 515 is a phosphoserine (Ser515).

Belongs to the ATPase alpha/beta chains family. In terms of assembly, V-ATPase is a heteromultimeric enzyme composed of a peripheral catalytic V1 complex (components A to H) attached to an integral membrane V0 proton pore complex (components: a, c, c', c'', d, e, f and VOA1). Interacts with RAV1 and RAV2 components of the RAVE complex, which are essential for the stability and assembly of V-ATPase.

Its subcellular location is the vacuole membrane. Its function is as follows. Non-catalytic subunit of the V1 complex of vacuolar(H+)-ATPase (V-ATPase), a multisubunit enzyme composed of a peripheral complex (V1) that hydrolyzes ATP and a membrane integral complex (V0) that translocates protons. V-ATPase is responsible for acidifying and maintaining the pH of intracellular compartments. This chain is V-type proton ATPase subunit B (VMA2), found in Saccharomyces cerevisiae (strain ATCC 204508 / S288c) (Baker's yeast).